The sequence spans 678 residues: uncharacterized protein (678 aa).

The next 2 helical transmembrane spans lie at 14-34 (LMFA…WTGL) and 180-200 (GAVI…IGGF).

The protein belongs to the mycobacterial PPE family.

It localises to the cell membrane. This is an uncharacterized protein from Mycobacterium tuberculosis (strain CDC 1551 / Oshkosh).